Consider the following 229-residue polypeptide: Clathrin light chain B (229 aa).

Over residues 1–17 (MADDFGFFSSSESGAPE) the composition is skewed to low complexity. Residues 1 to 82 (MADDFGFFSS…NGDVFQEANG (82 aa)) are disordered. Phosphoserine is present on residues Ser-11 and Ser-13. Residues 58–73 (GPTSGAGSEDMGTTVN) show a composition bias toward polar residues. Positions 93 to 155 (ADRLTQEPES…QVEKNKINNR (63 aa)) are involved in binding clathrin heavy chain. At Thr-187 the chain carries Phosphothreonine. A disulfide bridge connects residues Cys-199 and Cys-209. Lys-204 is modified (N6-acetyllysine). The residue at position 217 (Ser-217) is a Phosphoserine.

It belongs to the clathrin light chain family. In terms of assembly, clathrin coats are formed from molecules containing 3 heavy chains and 3 light chains. Interacts (via N-terminus) with HIP1. Interacts with HIP1R.

Its subcellular location is the cytoplasmic vesicle membrane. It is found in the membrane. It localises to the coated pit. Its function is as follows. Clathrin is the major protein of the polyhedral coat of coated pits and vesicles. In Homo sapiens (Human), this protein is Clathrin light chain B (CLTB).